A 582-amino-acid chain; its full sequence is MKYRTHKCNELSLDHVGEHVRLSGWVHRYRNHGGVVFIDLRDCFGITQIVCRQEENPELHQLMDQVRSEWVLCVEGLVCARLEGMENPNLVTGSIEVEVSSLEVLSRAQNLPFSISDEHINVNEELRLTYRYLDMRRGDILDRLMCRHKVMLACRQYLDEQGFTEVVTPILGKSTPEGARDYLVPSRIYPGNFYALPQSPQLFKQILMVGGLDRYFQIATCFRDEDLRADRQPEFTQIDMEMSFGGPEDLFPVVEELVARLFAVKGIELKAPFLRMTYQEAKDSYGTDKPDLRFGLRLKNCCEYARKFTFSIFLDQLAYGGTVKGFCVPGGADMSRKQLDIYTDFVKRYGAMGLVWIKKQDGGVSSNVAKFASEDVFQEMFEAFEAKDQDILLLIAAPEAVANQALDHLRRLIARERQLYDSTQYNFVWITDFPLFAKEEGELCPEHHPFTAPLDEDISLLDSDPFAVRSSSYDLVLNGYEIASGSQRIHNPDLQNKIFALLKLSQESVKEKFGFFIDALSFGTPPHLGIALGLDRIMMVLTGAETIREVIAFPKTQKAGDLMMSAPSEILPIQLKELGLKL.

Position 177 (Glu-177) interacts with L-aspartate. An aspartate region spans residues 201–204 (QLFK). An L-aspartate-binding site is contributed by Arg-223. Residues 223–225 (RDE) and Gln-232 each bind ATP. His-447 serves as a coordination point for L-aspartate. Glu-481 contributes to the ATP binding site. An L-aspartate-binding site is contributed by Arg-488. 533–536 (GLDR) is a binding site for ATP.

The protein belongs to the class-II aminoacyl-tRNA synthetase family. Type 1 subfamily. In terms of assembly, homodimer.

It localises to the cytoplasm. The enzyme catalyses tRNA(Asx) + L-aspartate + ATP = L-aspartyl-tRNA(Asx) + AMP + diphosphate. Functionally, aspartyl-tRNA synthetase with relaxed tRNA specificity since it is able to aspartylate not only its cognate tRNA(Asp) but also tRNA(Asn). Reaction proceeds in two steps: L-aspartate is first activated by ATP to form Asp-AMP and then transferred to the acceptor end of tRNA(Asp/Asn). This Chlamydia trachomatis serovar A (strain ATCC VR-571B / DSM 19440 / HAR-13) protein is Aspartate--tRNA(Asp/Asn) ligase.